A 463-amino-acid polypeptide reads, in one-letter code: Perilipin-5 (463 aa).

The interaction with LIPE stretch occupies residues 1-108 (MSEEEAAQIP…KLEEKLPFLQ (108 aa)). Positions 1-173 (MSEEEAAQIP…HFLPMTEEEL (173 aa)) are essential for lipid droplet targeting. Phosphoserine occurs at positions 2, 148, and 322. The interval 185-463 (VGSVEDQRRQ…KHTLMPELDF (279 aa)) is interaction with PNPLA2 and ABHD5. The interval 444 to 463 (QEPETPSCPVKHTLMPELDF) is recruits mitochondria at the lipid droplet surface.

This sequence belongs to the perilipin family. In terms of assembly, homooligomer. Interacts with PNPLA2; prevents interaction of PNPLA2 with ABHD5. Interacts with ABHD5; targets ABHD5 to lipid droplets and promotes interaction of ABHD5 with PNPLA2. Interacts with LIPE. Phosphorylated by PKA. Phosphorylated on serine in skeletal muscle at rest or upon lipolytic stimulation. As to expression, expressed in skeletal muscle, liver, heart and kidney.

The protein localises to the lipid droplet. It is found in the cytoplasm. It localises to the mitochondrion. Functionally, lipid droplet-associated protein that maintains the balance between lipogenesis and lipolysis and also regulates fatty acid oxidation in oxidative tissues. Recruits mitochondria to the surface of lipid droplets and is involved in lipid droplet homeostasis by regulating both the storage of fatty acids in the form of triglycerides and the release of fatty acids for mitochondrial fatty acid oxidation. In lipid droplet triacylglycerol hydrolysis, plays a role as a scaffolding protein for three major key lipolytic players: ABHD5, PNPLA2 and LIPE. Reduces the triacylglycerol hydrolase activity of PNPLA2 by recruiting and sequestering PNPLA2 to lipid droplets. Phosphorylation by PKA enables lipolysis probably by promoting release of ABHD5 from the perilipin scaffold and by facilitating interaction of ABHD5 with PNPLA2. Also increases lipolysis through interaction with LIPE and upon PKA-mediated phosphorylation of LIPE. The protein is Perilipin-5 (PLIN5) of Homo sapiens (Human).